The following is a 1013-amino-acid chain: A-type ATP synthase subunit A (1013 aa).

Residues 392–525 enclose the DOD-type homing endonuclease domain; that stretch reads FLGYVIGDGT…LTYLLAKLGI (134 aa).

This sequence belongs to the ATPase alpha/beta chains family. As to quaternary structure, has multiple subunits with at least A(3), B(3), C, D, E, F, H, I and proteolipid K(x). Post-translationally, this protein undergoes a protein self splicing that involves a post-translational excision of the VDE intervening region (intein) followed by peptide ligation.

It localises to the cell membrane. It catalyses the reaction ATP + H2O + 4 H(+)(in) = ADP + phosphate + 5 H(+)(out). Functionally, component of the A-type ATP synthase that produces ATP from ADP in the presence of a proton gradient across the membrane. The A chain is the catalytic subunit. The sequence is that of A-type ATP synthase subunit A from Pyrococcus furiosus (strain ATCC 43587 / DSM 3638 / JCM 8422 / Vc1).